Consider the following 202-residue polypeptide: B-cell CLL/lymphoma 7 protein family member B (202 aa).

Residues 53 to 202 (DSKEKEKSKS…PTVPQTASES (150 aa)) form a disordered region. Over residues 90 to 99 (ENSNQSSVSD) the composition is skewed to polar residues. A compositionally biased stretch (low complexity) spans 107-123 (SSTNSSPSPQQSESLSP). Residues Ser-114, Ser-118, Ser-120, Ser-122, Ser-127, Ser-148, and Ser-152 each carry the phosphoserine modification.

The protein belongs to the BCL7 family. As to expression, ubiquitous.

Its function is as follows. Positive regulator of apoptosis. Plays a role in the Wnt signaling pathway, negatively regulating the expression of Wnt signaling components CTNNB1 and HMGA1. Involved in cell cycle progression, maintenance of the nuclear structure and stem cell differentiation. May play a role in lung tumor development or progression. The chain is B-cell CLL/lymphoma 7 protein family member B (BCL7B) from Homo sapiens (Human).